The sequence spans 159 residues: Mesogenin-1 (159 aa).

Positions 79–101 (PGQARLPKGTKVRMSAQRRRKAS) are disordered. Basic residues predominate over residues 86 to 100 (KGTKVRMSAQRRRKA). Residues 95–149 (QRRRKASEREKLRMRTLADALHTLRNYLPPAYSQRGQPLTKIQTLKCTIKYISEL) form the bHLH domain.

Its subcellular location is the nucleus. Its function is as follows. Involved in specifying the paraxial, but not dorsal, mesoderm. May regulate the expression of T-box transcription factors required for mesoderm formation and differentiation. The sequence is that of Mesogenin-1 (MSGN1) from Gallus gallus (Chicken).